A 152-amino-acid polypeptide reads, in one-letter code: Putative aryl-alcohol dehydrogenase YFL057C (152 aa).

This sequence belongs to the aldo/keto reductase family. Aldo/keto reductase 2 subfamily.

Putative aryl-alcohol dehydrogenase. This is Putative aryl-alcohol dehydrogenase YFL057C from Saccharomyces cerevisiae (strain ATCC 204508 / S288c) (Baker's yeast).